A 313-amino-acid polypeptide reads, in one-letter code: Pyrimidine-specific ribonucleoside hydrolase RihB (313 aa).

The active-site Proton acceptor is D11. Ca(2+) contacts are provided by D11, D16, and V124. 2 residues coordinate substrate: Q227 and H239. D240 contributes to the Ca(2+) binding site.

The protein belongs to the IUNH family. RihB subfamily. In terms of assembly, homotetramer. It depends on Ca(2+) as a cofactor.

It carries out the reaction a pyrimidine ribonucleoside + H2O = a pyrimidine nucleobase + D-ribose. Functionally, hydrolyzes cytidine or uridine to ribose and cytosine or uracil, respectively. Has a clear preference for cytidine over uridine. Strictly specific for ribonucleosides. This Escherichia coli O1:K1 / APEC protein is Pyrimidine-specific ribonucleoside hydrolase RihB.